The primary structure comprises 61 residues: Photosystem II reaction center protein K (61 aa).

Residues 1 to 24 (MLNIFSLICICLNSALYSSNFFFA) constitute a propeptide that is removed on maturation. A helical membrane pass occupies residues 40–60 (MPVIPLFFFLLAFVWQAAVSF).

The protein belongs to the PsbK family. As to quaternary structure, PSII is composed of 1 copy each of membrane proteins PsbA, PsbB, PsbC, PsbD, PsbE, PsbF, PsbH, PsbI, PsbJ, PsbK, PsbL, PsbM, PsbT, PsbX, PsbY, PsbZ, Psb30/Ycf12, at least 3 peripheral proteins of the oxygen-evolving complex and a large number of cofactors. It forms dimeric complexes.

It localises to the plastid. Its subcellular location is the chloroplast thylakoid membrane. Its function is as follows. One of the components of the core complex of photosystem II (PSII). PSII is a light-driven water:plastoquinone oxidoreductase that uses light energy to abstract electrons from H(2)O, generating O(2) and a proton gradient subsequently used for ATP formation. It consists of a core antenna complex that captures photons, and an electron transfer chain that converts photonic excitation into a charge separation. This is Photosystem II reaction center protein K from Vitis vinifera (Grape).